A 345-amino-acid chain; its full sequence is S-adenosylmethionine:tRNA ribosyltransferase-isomerase (345 aa).

It belongs to the QueA family. Monomer.

The protein localises to the cytoplasm. The catalysed reaction is 7-aminomethyl-7-carbaguanosine(34) in tRNA + S-adenosyl-L-methionine = epoxyqueuosine(34) in tRNA + adenine + L-methionine + 2 H(+). Its pathway is tRNA modification; tRNA-queuosine biosynthesis. Its function is as follows. Transfers and isomerizes the ribose moiety from AdoMet to the 7-aminomethyl group of 7-deazaguanine (preQ1-tRNA) to give epoxyqueuosine (oQ-tRNA). The polypeptide is S-adenosylmethionine:tRNA ribosyltransferase-isomerase (Rhodospirillum rubrum (strain ATCC 11170 / ATH 1.1.1 / DSM 467 / LMG 4362 / NCIMB 8255 / S1)).